We begin with the raw amino-acid sequence, 168 residues long: Pollen allergen Cro s 1 (168 aa).

Positions 1-26 (MGKCQAVFLLVGALCVLSLAGVANAA) are cleaved as a signal peptide. Cystine bridges form between cysteine 38/cysteine 109, cysteine 41/cysteine 153, and cysteine 62/cysteine 97. A glycan (N-linked (GlcNAc...) asparagine) is linked at asparagine 64.

The protein belongs to the Ole e I family. As to expression, expressed in pollen.

It is found in the secreted. This Crocus sativus (Saffron) protein is Pollen allergen Cro s 1.